Consider the following 554-residue polypeptide: Macrophage colony-stimulating factor 1 (554 aa).

The signal sequence occupies residues 1–32 (MTAPGAAGRCPPTTWLGSLLLLVCLLASRSIT). Topologically, residues 33–496 (EEVSEYCSHM…GSFSPQLQES (464 aa)) are lumenal. 3 disulfides stabilise this stretch: C39-C122, C80-C171, and C134-C178. 2 N-linked (GlcNAc...) asparagine glycosylation sites follow: N154 and N172. The disordered stretch occupies residues 224 to 488 (EDSEGTEGSS…TGHERQSEGS (265 aa)). Phosphothreonine; by FAM20C is present on T266. S309 carries O-linked (Xyl...) (chondroitin sulfate) serine glycosylation. A compositionally biased stretch (low complexity) spans 344 to 354 (LSASSPLPASA). Residues T363 and T365 are each glycosylated (O-linked (GalNAc...) threonine). Residues 404–433 (RISSLRPQGLSNPSTLSAQPQLSRSHSSGS) show a composition bias toward polar residues. The O-glycosylated at one site stretch occupies residues 406 to 426 (SSLRPQGLSNPSTLSAQPQLS). Residues 440–453 (LEGRRSTRDRRSPA) show a composition bias toward basic and acidic residues. The helical transmembrane segment at 497-517 (VFHLLVPSVILVLLAVGGLLF) threads the bilayer. Over 518-554 (YRWRRRSHQEPQRADSPLEQPEGSPLTQDDRQVELPV) the chain is Cytoplasmic. The disordered stretch occupies residues 526–554 (QEPQRADSPLEQPEGSPLTQDDRQVELPV). A compositionally biased stretch (basic and acidic residues) spans 545–554 (QDDRQVELPV).

As to quaternary structure, homodimer or heterodimer; disulfide-linked. Likely to exist in multiple forms: homodimer consisting of 2 identical 150-200 kDa proteoglycan subunits, heterodimer consisting of a 150-200 kDa proteoglycan subunit and a truncated 43 kDa subunit, and homodimer consisting of 2 identical 43 kDa subunits. Interacts with CSF1R. N-glycosylated. In terms of processing, O-glycosylated; contains chondroitin sulfate. O-glycosylated with core 1 or possibly core 8 glycans. Post-translationally, O-glycosylated.

Its subcellular location is the cell membrane. It is found in the secreted. The protein localises to the extracellular space. Functionally, cytokine that plays an essential role in the regulation of survival, proliferation and differentiation of hematopoietic precursor cells, especially mononuclear phagocytes, such as macrophages and monocytes. Promotes the release of pro-inflammatory chemokines, and thereby plays an important role in innate immunity and in inflammatory processes. Plays an important role in the regulation of osteoclast proliferation and differentiation, the regulation of bone resorption, and is required for normal bone development. Required for normal male and female fertility. Promotes reorganization of the actin cytoskeleton, regulates formation of membrane ruffles, cell adhesion and cell migration. Plays a role in lipoprotein clearance. This Homo sapiens (Human) protein is Macrophage colony-stimulating factor 1 (CSF1).